Reading from the N-terminus, the 492-residue chain is N-succinylglutamate 5-semialdehyde dehydrogenase (492 aa).

NAD(+) is bound at residue 220–225 (GSANTG). Residues E243 and C277 contribute to the active site.

The protein belongs to the aldehyde dehydrogenase family. AstD subfamily.

The catalysed reaction is N-succinyl-L-glutamate 5-semialdehyde + NAD(+) + H2O = N-succinyl-L-glutamate + NADH + 2 H(+). The protein operates within amino-acid degradation; L-arginine degradation via AST pathway; L-glutamate and succinate from L-arginine: step 4/5. Its function is as follows. Catalyzes the NAD-dependent reduction of succinylglutamate semialdehyde into succinylglutamate. In Escherichia coli O157:H7, this protein is N-succinylglutamate 5-semialdehyde dehydrogenase.